The following is a 383-amino-acid chain: 8-amino-7-oxononanoate synthase (383 aa).

R21 contributes to the substrate binding site. 108–109 (GY) provides a ligand contact to pyridoxal 5'-phosphate. H133 is a binding site for substrate. Pyridoxal 5'-phosphate-binding residues include S179, H207, and T233. K236 is modified (N6-(pyridoxal phosphate)lysine). T350 contacts substrate.

This sequence belongs to the class-II pyridoxal-phosphate-dependent aminotransferase family. BioF subfamily. Homodimer. It depends on pyridoxal 5'-phosphate as a cofactor.

It catalyses the reaction 6-carboxyhexanoyl-[ACP] + L-alanine + H(+) = (8S)-8-amino-7-oxononanoate + holo-[ACP] + CO2. Its pathway is cofactor biosynthesis; biotin biosynthesis. Functionally, catalyzes the decarboxylative condensation of pimeloyl-[acyl-carrier protein] and L-alanine to produce 8-amino-7-oxononanoate (AON), [acyl-carrier protein], and carbon dioxide. The polypeptide is 8-amino-7-oxononanoate synthase (Serratia proteamaculans (strain 568)).